The following is a 73-amino-acid chain: Cell division protein ZapB (73 aa).

Residues 3–66 (LELLSQLETK…SWSDKVNGLV (64 aa)) are a coiled coil.

The protein belongs to the ZapB family. In terms of assembly, homodimer. The ends of the coiled-coil dimer bind to each other, forming polymers. Interacts with FtsZ.

It is found in the cytoplasm. Non-essential, abundant cell division factor that is required for proper Z-ring formation. It is recruited early to the divisome by direct interaction with FtsZ, stimulating Z-ring assembly and thereby promoting cell division earlier in the cell cycle. Its recruitment to the Z-ring requires functional FtsA or ZipA. This is Cell division protein ZapB from Shewanella frigidimarina (strain NCIMB 400).